The sequence spans 161 residues: Crossover junction endodeoxyribonuclease RuvC (161 aa).

Active-site residues include aspartate 7, glutamate 67, and aspartate 139. Mg(2+) contacts are provided by aspartate 7, glutamate 67, and aspartate 139.

The protein belongs to the RuvC family. As to quaternary structure, homodimer which binds Holliday junction (HJ) DNA. The HJ becomes 2-fold symmetrical on binding to RuvC with unstacked arms; it has a different conformation from HJ DNA in complex with RuvA. In the full resolvosome a probable DNA-RuvA(4)-RuvB(12)-RuvC(2) complex forms which resolves the HJ. Requires Mg(2+) as cofactor.

The protein localises to the cytoplasm. The catalysed reaction is Endonucleolytic cleavage at a junction such as a reciprocal single-stranded crossover between two homologous DNA duplexes (Holliday junction).. Its function is as follows. The RuvA-RuvB-RuvC complex processes Holliday junction (HJ) DNA during genetic recombination and DNA repair. Endonuclease that resolves HJ intermediates. Cleaves cruciform DNA by making single-stranded nicks across the HJ at symmetrical positions within the homologous arms, yielding a 5'-phosphate and a 3'-hydroxyl group; requires a central core of homology in the junction. The consensus cleavage sequence is 5'-(A/T)TT(C/G)-3'. Cleavage occurs on the 3'-side of the TT dinucleotide at the point of strand exchange. HJ branch migration catalyzed by RuvA-RuvB allows RuvC to scan DNA until it finds its consensus sequence, where it cleaves and resolves the cruciform DNA. This is Crossover junction endodeoxyribonuclease RuvC from Syntrophotalea carbinolica (strain DSM 2380 / NBRC 103641 / GraBd1) (Pelobacter carbinolicus).